A 205-amino-acid chain; its full sequence is Ribosomal RNA small subunit methyltransferase G (205 aa).

Residues Gly-70, Leu-75, 124 to 125, and Arg-138 each bind S-adenosyl-L-methionine; that span reads IE.

Belongs to the methyltransferase superfamily. RNA methyltransferase RsmG family.

Its subcellular location is the cytoplasm. The catalysed reaction is guanosine(527) in 16S rRNA + S-adenosyl-L-methionine = N(7)-methylguanosine(527) in 16S rRNA + S-adenosyl-L-homocysteine. Specifically methylates the N7 position of guanine in position 527 of 16S rRNA. This chain is Ribosomal RNA small subunit methyltransferase G, found in Ruegeria sp. (strain TM1040) (Silicibacter sp.).